The following is a 190-amino-acid chain: Adenine phosphoribosyltransferase (190 aa).

The protein belongs to the purine/pyrimidine phosphoribosyltransferase family. In terms of assembly, homodimer.

It is found in the cytoplasm. It carries out the reaction AMP + diphosphate = 5-phospho-alpha-D-ribose 1-diphosphate + adenine. It functions in the pathway purine metabolism; AMP biosynthesis via salvage pathway; AMP from adenine: step 1/1. Catalyzes a salvage reaction resulting in the formation of AMP, that is energically less costly than de novo synthesis. The protein is Adenine phosphoribosyltransferase of Treponema denticola (strain ATCC 35405 / DSM 14222 / CIP 103919 / JCM 8153 / KCTC 15104).